The following is a 151-amino-acid chain: SsrA-binding protein (151 aa).

The disordered stretch occupies residues 132 to 151 (KRQTIKKRDQDREIHRKYGI).

Belongs to the SmpB family.

The protein resides in the cytoplasm. Required for rescue of stalled ribosomes mediated by trans-translation. Binds to transfer-messenger RNA (tmRNA), required for stable association of tmRNA with ribosomes. tmRNA and SmpB together mimic tRNA shape, replacing the anticodon stem-loop with SmpB. tmRNA is encoded by the ssrA gene; the 2 termini fold to resemble tRNA(Ala) and it encodes a 'tag peptide', a short internal open reading frame. During trans-translation Ala-aminoacylated tmRNA acts like a tRNA, entering the A-site of stalled ribosomes, displacing the stalled mRNA. The ribosome then switches to translate the ORF on the tmRNA; the nascent peptide is terminated with the 'tag peptide' encoded by the tmRNA and targeted for degradation. The ribosome is freed to recommence translation, which seems to be the essential function of trans-translation. This chain is SsrA-binding protein, found in Lactobacillus johnsonii (strain CNCM I-12250 / La1 / NCC 533).